The primary structure comprises 540 residues: Putative laccase-11 (540 aa).

3 Plastocyanin-like domains span residues 1-114 (MATV…PPRG), 124-279 (REVP…YYGA), and 389-523 (NFPA…NDGP). Residues His48, His50, His93, and His95 each contribute to the Cu cation site. Cu cation contacts are provided by His440, His443, His445, His502, Cys503, His504, and His508.

The protein belongs to the multicopper oxidase family. Cu cation is required as a cofactor.

It is found in the secreted. Its subcellular location is the extracellular space. The protein localises to the apoplast. It carries out the reaction 4 hydroquinone + O2 = 4 benzosemiquinone + 2 H2O. In terms of biological role, lignin degradation and detoxification of lignin-derived products. The protein is Putative laccase-11 (LAC11) of Oryza sativa subsp. japonica (Rice).